A 291-amino-acid polypeptide reads, in one-letter code: Homoserine kinase (291 aa).

80 to 90 (RPSSGLGSSAA) serves as a coordination point for ATP.

Belongs to the GHMP kinase family. Homoserine kinase subfamily.

The protein resides in the cytoplasm. It catalyses the reaction L-homoserine + ATP = O-phospho-L-homoserine + ADP + H(+). Its pathway is amino-acid biosynthesis; L-threonine biosynthesis; L-threonine from L-aspartate: step 4/5. Catalyzes the ATP-dependent phosphorylation of L-homoserine to L-homoserine phosphate. This chain is Homoserine kinase, found in Haloquadratum walsbyi (strain DSM 16790 / HBSQ001).